The sequence spans 418 residues: UDP-N-acetylglucosamine 1-carboxyvinyltransferase (418 aa).

22–23 (KN) provides a ligand contact to phosphoenolpyruvate. UDP-N-acetyl-alpha-D-glucosamine is bound at residue Arg-92. Residue Cys-116 is the Proton donor of the active site. Cys-116 carries the 2-(S-cysteinyl)pyruvic acid O-phosphothioketal modification. UDP-N-acetyl-alpha-D-glucosamine is bound by residues Asp-305 and Val-327.

It belongs to the EPSP synthase family. MurA subfamily.

The protein localises to the cytoplasm. It carries out the reaction phosphoenolpyruvate + UDP-N-acetyl-alpha-D-glucosamine = UDP-N-acetyl-3-O-(1-carboxyvinyl)-alpha-D-glucosamine + phosphate. The protein operates within cell wall biogenesis; peptidoglycan biosynthesis. Cell wall formation. Adds enolpyruvyl to UDP-N-acetylglucosamine. The sequence is that of UDP-N-acetylglucosamine 1-carboxyvinyltransferase from Endomicrobium trichonymphae.